A 404-amino-acid polypeptide reads, in one-letter code: Phosphopentomutase (404 aa).

6 residues coordinate Mn(2+): D10, D303, H308, D344, H345, and H356.

The protein belongs to the phosphopentomutase family. Mn(2+) serves as cofactor.

Its subcellular location is the cytoplasm. It carries out the reaction 2-deoxy-alpha-D-ribose 1-phosphate = 2-deoxy-D-ribose 5-phosphate. The enzyme catalyses alpha-D-ribose 1-phosphate = D-ribose 5-phosphate. It participates in carbohydrate degradation; 2-deoxy-D-ribose 1-phosphate degradation; D-glyceraldehyde 3-phosphate and acetaldehyde from 2-deoxy-alpha-D-ribose 1-phosphate: step 1/2. Its function is as follows. Isomerase that catalyzes the conversion of deoxy-ribose 1-phosphate (dRib-1-P) and ribose 1-phosphate (Rib-1-P) to deoxy-ribose 5-phosphate (dRib-5-P) and ribose 5-phosphate (Rib-5-P), respectively. The protein is Phosphopentomutase of Shewanella putrefaciens (strain CN-32 / ATCC BAA-453).